A 92-amino-acid chain; its full sequence is Co-chaperonin GroES (92 aa).

It belongs to the GroES chaperonin family. As to quaternary structure, heptamer of 7 subunits arranged in a ring. Interacts with the chaperonin GroEL.

It localises to the cytoplasm. Its function is as follows. Together with the chaperonin GroEL, plays an essential role in assisting protein folding. The GroEL-GroES system forms a nano-cage that allows encapsulation of the non-native substrate proteins and provides a physical environment optimized to promote and accelerate protein folding. GroES binds to the apical surface of the GroEL ring, thereby capping the opening of the GroEL channel. This chain is Co-chaperonin GroES, found in Thermotoga petrophila (strain ATCC BAA-488 / DSM 13995 / JCM 10881 / RKU-1).